The sequence spans 526 residues: DNA polymerase epsilon subunit B (526 aa).

This sequence belongs to the DNA polymerase epsilon subunit B family. Subunit of the DNA polymerase II. Interacts with POL2A (via C-terminus).

Its subcellular location is the nucleus. Its function is as follows. As accessory component of DNA polymerase II participates in chromosomal DNA replication. Required for the timing and determination of cell fate during plant embryogenesis and root pole development, by promoting cell cycle and cell type patterning. Necessary for proper shoot (SAM) and root apical meristem (RAM) functions. Is essential to promote the first divisions of the zygote. This Arabidopsis thaliana (Mouse-ear cress) protein is DNA polymerase epsilon subunit B.